A 560-amino-acid chain; its full sequence is MFS siderochrome iron transporter 1 (560 aa).

N29 is a glycosylation site (N-linked (GlcNAc...) asparagine). Helical transmembrane passes span 53-73 (LWLT…LVSV), 90-110 (LLAS…LTLA), 115-135 (VWGR…ALIM), 146-166 (VAAH…VDVM), 177-194 (MIMF…TFAG), 211-231 (FGAF…IMLF), 264-284 (VVGI…FSIV), 291-311 (WATG…AIFL), 331-351 (PTII…LLTI), 354-374 (AGYV…GIGL), and 379-399 (FKWA…LLIP). N404 is a glycosylation site (N-linked (GlcNAc...) asparagine). The next 3 membrane-spanning stretches (helical) occupy residues 407–427 (IGAV…FSVC), 441–461 (VAVV…VGLA), and 522–542 (VIAG…WRNV).

This sequence belongs to the major facilitator superfamily.

It is found in the membrane. Major facilitator transporter involved in siderophore transport. In Ajellomyces capsulatus (Darling's disease fungus), this protein is MFS siderochrome iron transporter 1.